The following is a 484-amino-acid chain: MKILQVASEVAPLAKTGGLADVVAALPKELRRMGHDVRVAIPFYKEVSSGNLPVRKARKSAEVALGGELHKGYLRQTALGEVPVYLVENRDLFGRDHLYGPPEGDYPDNPLRFAFFCRSVLQFLKRMDFRPDVIHCHDWQSALIPIILKYELGHDPFFNRTAVIFTIHNLAYQGVFPADALAQTGLDPSLFSVDRIEFYGRINLLKGAILAADAITTVSETYCHEILSPGQGCGLEGVLERRQADLAGILNGLDSEEWNPSLDRRIFRNYSSKSLAGKGADKRELQRELGLKAGASIPIIGMVGRIVEQKGIDLVIDLLPRFAAEELQLVILGTGDLRLMHQLHEFRNKGVKNVSINLGFKEPLAPKIYAGCDMFLMPSRFEPCGLSQLIALSYGTVPIVRRTGGLADTVIDVTANPREGNGFSFTEFSADACWDAVQRALAAYRDREGWRKIMRRGMLRDVSWRSAAGKYEELYRTCADNRRG.

Lys-15 provides a ligand contact to ADP-alpha-D-glucose.

It belongs to the glycosyltransferase 1 family. Bacterial/plant glycogen synthase subfamily.

The enzyme catalyses [(1-&gt;4)-alpha-D-glucosyl](n) + ADP-alpha-D-glucose = [(1-&gt;4)-alpha-D-glucosyl](n+1) + ADP + H(+). Its pathway is glycan biosynthesis; glycogen biosynthesis. Synthesizes alpha-1,4-glucan chains using ADP-glucose. The sequence is that of Glycogen synthase 2 from Geobacter metallireducens (strain ATCC 53774 / DSM 7210 / GS-15).